Here is a 354-residue protein sequence, read N- to C-terminus: Peptide chain release factor 1 (354 aa).

N5-methylglutamine is present on Gln230.

It belongs to the prokaryotic/mitochondrial release factor family. Methylated by PrmC. Methylation increases the termination efficiency of RF1.

It is found in the cytoplasm. In terms of biological role, peptide chain release factor 1 directs the termination of translation in response to the peptide chain termination codons UAG and UAA. In Leptospira interrogans serogroup Icterohaemorrhagiae serovar copenhageni (strain Fiocruz L1-130), this protein is Peptide chain release factor 1.